Consider the following 385-residue polypeptide: Putative glutamate--cysteine ligase 2 (385 aa).

Belongs to the glutamate--cysteine ligase type 2 family. YbdK subfamily.

The enzyme catalyses L-cysteine + L-glutamate + ATP = gamma-L-glutamyl-L-cysteine + ADP + phosphate + H(+). In terms of biological role, ATP-dependent carboxylate-amine ligase which exhibits weak glutamate--cysteine ligase activity. This is Putative glutamate--cysteine ligase 2 from Herpetosiphon aurantiacus (strain ATCC 23779 / DSM 785 / 114-95).